A 282-amino-acid chain; its full sequence is NADPH-dependent 7-cyano-7-deazaguanine reductase (282 aa).

88-90 (IES) provides a ligand contact to substrate. 90–91 (SK) is an NADPH binding site. Residue Cys-190 is the Thioimide intermediate of the active site. The Proton donor role is filled by Asp-197. 229-230 (HE) lines the substrate pocket. An NADPH-binding site is contributed by 258–259 (RG).

Belongs to the GTP cyclohydrolase I family. QueF type 2 subfamily. In terms of assembly, homodimer.

The protein resides in the cytoplasm. The enzyme catalyses 7-aminomethyl-7-carbaguanine + 2 NADP(+) = 7-cyano-7-deazaguanine + 2 NADPH + 3 H(+). It functions in the pathway tRNA modification; tRNA-queuosine biosynthesis. In terms of biological role, catalyzes the NADPH-dependent reduction of 7-cyano-7-deazaguanine (preQ0) to 7-aminomethyl-7-deazaguanine (preQ1). The sequence is that of NADPH-dependent 7-cyano-7-deazaguanine reductase from Escherichia coli O139:H28 (strain E24377A / ETEC).